Here is a 309-residue protein sequence, read N- to C-terminus: Probable manganese-dependent inorganic pyrophosphatase (309 aa).

Mn(2+) contacts are provided by H9, D13, D15, D75, H97, and D149.

It belongs to the PPase class C family. Mn(2+) serves as cofactor.

Its subcellular location is the cytoplasm. It catalyses the reaction diphosphate + H2O = 2 phosphate + H(+). This is Probable manganese-dependent inorganic pyrophosphatase from Bacillus cereus (strain 03BB102).